The following is a 47-amino-acid chain: Exoenzymes regulatory protein AepH (47 aa).

Composition is skewed to basic and acidic residues over residues Met-1–His-17 and Thr-33–Val-47. The disordered stretch occupies residues Met-1 to Val-47.

Its function is as follows. Involved in the control of extracellular enzymes production. Stimulates PEL, PEH, CEL, and PRT production. This is Exoenzymes regulatory protein AepH (aepH) from Pectobacterium carotovorum subsp. carotovorum (Erwinia carotovora subsp. carotovora).